A 431-amino-acid chain; its full sequence is Dihydroorotase (431 aa).

Positions 59 and 61 each coordinate Zn(2+). Residues 61–63 (HLR) and asparagine 93 contribute to the substrate site. Residues aspartate 151, histidine 178, histidine 231, and aspartate 304 each coordinate Zn(2+). Aspartate 304 is a catalytic residue. Substrate contacts are provided by residues histidine 308 and 322 to 323 (FG).

This sequence belongs to the metallo-dependent hydrolases superfamily. DHOase family. Class I DHOase subfamily. Requires Zn(2+) as cofactor.

It catalyses the reaction (S)-dihydroorotate + H2O = N-carbamoyl-L-aspartate + H(+). It participates in pyrimidine metabolism; UMP biosynthesis via de novo pathway; (S)-dihydroorotate from bicarbonate: step 3/3. Its function is as follows. Catalyzes the reversible cyclization of carbamoyl aspartate to dihydroorotate. In Caldanaerobacter subterraneus subsp. tengcongensis (strain DSM 15242 / JCM 11007 / NBRC 100824 / MB4) (Thermoanaerobacter tengcongensis), this protein is Dihydroorotase.